We begin with the raw amino-acid sequence, 292 residues long: 33 kDa chaperonin (292 aa).

Intrachain disulfides connect C230–C232 and C263–C266.

This sequence belongs to the HSP33 family. Post-translationally, under oxidizing conditions two disulfide bonds are formed involving the reactive cysteines. Under reducing conditions zinc is bound to the reactive cysteines and the protein is inactive.

The protein localises to the cytoplasm. In terms of biological role, redox regulated molecular chaperone. Protects both thermally unfolding and oxidatively damaged proteins from irreversible aggregation. Plays an important role in the bacterial defense system toward oxidative stress. The chain is 33 kDa chaperonin from Shigella dysenteriae serotype 1 (strain Sd197).